The following is a 315-amino-acid chain: Prephenate dehydratase (315 aa).

In terms of domain architecture, Prephenate dehydratase spans Arg3–Arg190. The 78-residue stretch at Ser204–Pro281 folds into the ACT domain.

As to quaternary structure, homodimer.

The enzyme catalyses prephenate + H(+) = 3-phenylpyruvate + CO2 + H2O. The protein operates within amino-acid biosynthesis; L-phenylalanine biosynthesis; phenylpyruvate from prephenate: step 1/1. The sequence is that of Prephenate dehydratase (pheA) from Mycobacterium sp. (strain JLS).